The chain runs to 166 residues: Small ribosomal subunit protein uS5 (166 aa).

The S5 DRBM domain occupies 12–75 (YIEKLVQVNR…EAARRNMIQV (64 aa)).

Belongs to the universal ribosomal protein uS5 family. As to quaternary structure, part of the 30S ribosomal subunit. Contacts proteins S4 and S8.

In terms of biological role, with S4 and S12 plays an important role in translational accuracy. Functionally, located at the back of the 30S subunit body where it stabilizes the conformation of the head with respect to the body. This is Small ribosomal subunit protein uS5 from Pseudomonas aeruginosa (strain LESB58).